Consider the following 131-residue polypeptide: ATP synthase epsilon chain (131 aa).

Belongs to the ATPase epsilon chain family. F-type ATPases have 2 components, CF(1) - the catalytic core - and CF(0) - the membrane proton channel. CF(1) has five subunits: alpha(3), beta(3), gamma(1), delta(1), epsilon(1). CF(0) has three main subunits: a, b and c.

The protein resides in the cell membrane. Produces ATP from ADP in the presence of a proton gradient across the membrane. This chain is ATP synthase epsilon chain, found in Clostridium novyi (strain NT).